The sequence spans 117 residues: Transcription elongation factor A protein-like 8 (117 aa).

The segment at 1 to 82 (MQKSCDENEG…EEVIRGVDEL (82 aa)) is disordered. Positions 41 to 82 (NVREETEGSHRGEPAEPSPEPKEDTPARHLNPEEVIRGVDEL) are enriched in basic and acidic residues. Positions 73–100 (EEVIRGVDELERLREEIRRVRNKFVLMH) form a coiled coil.

Belongs to the TFS-II family. TFA subfamily.

Its subcellular location is the nucleus. Its function is as follows. May be involved in transcriptional regulation. The chain is Transcription elongation factor A protein-like 8 (Tceal8) from Mus musculus (Mouse).